An 849-amino-acid polypeptide reads, in one-letter code: MPPTLALLLFLALSAVAAVGGAGDVRRVLHEPLFPIEWTPPPSTASPSPPSPDFSSDPSTPATPVDNGGPALLPPPPPNTVAADVSSSRSGPDPRARGGGGGGTPKAAIVVASAAAAAVLALLAFAAAFLLTGRLARHPAAAAAQAHKPPGHAHAGAGSVAGAHADVAGCSTAVSPYRKVRPERARRGMCRDVDTVPSPELRPLPPLRRGASALTQGSSDEDAAYYTPGQRSAGSGGGGGGEGGGTWSEASASSPRTTTASRRSLPSLTSDFFPTTPAAAPVPAPAAAAPPPAPPAPRSRRTPPRTRFSAGSGAEMNKQMASPPSNPPPAPPPPPPPPSRFNNTTPKPPPPPPPPEPPTGPVSARRLLRPLPAEGPSIVIPRAPAMAVTKDNDATAATMSVRTRGEAAGDEPRPKLKPLHWDKVRTSSDRDMVWDRLKLDEDMIEVLFMNNSTAVAPRMDNPKKVGMPQFKQEERVLDPKKAQNIAILLRALNVTLEEVTDALLDGNAECLGAELLETLVKMAPTKEEELKLRDFTGDLSKLGSAERFLKAVLDIPFAFKRVDVMLYRANFENEVNYLRKSFQTLEAACDDLKGSRLFLKLLEAVLRTGNRMNVGTNRGEAKAFKLDTLLKLADVKGADGKTTLLHFVVQEIVRSEDAKSEKAPENHITNIAKVEQLRRQGLKVVSGLSTELGNVKRAATMDFDVLHGYVSKLEAGLGKIKSVLQLEKQCSQGVNFFATMREFLKEAEQEIEQVRHDEKAALGRVKEITEYFHGNAVKEEAHPLRIFMVVRDFLSMLDHVCREVSQQDRTFVGSARSFRISAANALPILNMQGQKGGRESSSDGDSPSM.

An N-terminal signal peptide occupies residues 1–22 (MPPTLALLLFLALSAVAAVGGA). The disordered stretch occupies residues 36–104 (IEWTPPPSTA…RARGGGGGGT (69 aa)). The segment covering 38 to 52 (WTPPPSTASPSPPSP) has biased composition (pro residues). A compositionally biased stretch (low complexity) spans 53 to 64 (DFSSDPSTPATP). The chain crosses the membrane as a helical span at residues 109–129 (IVVASAAAAAVLALLAFAAAF). Over residues 185 to 194 (ARRGMCRDVD) the composition is skewed to basic and acidic residues. The interval 185–364 (ARRGMCRDVD…PEPPTGPVSA (180 aa)) is disordered. The span at 234-246 (GSGGGGGGEGGGT) shows a compositional bias: gly residues. Residues 247–279 (WSEASASSPRTTTASRRSLPSLTSDFFPTTPAA) are compositionally biased toward low complexity. 3 stretches are compositionally biased toward pro residues: residues 280–297 (APVPAPAAAAPPPAPPAP), 324–339 (PSNPPPAPPPPPPPPS), and 346–360 (PKPPPPPPPPEPPTG). Positions 406–823 (EAAGDEPRPK…SARSFRISAA (418 aa)) constitute an FH2 domain.

Belongs to the formin-like family. Class-I subfamily.

The protein localises to the membrane. This chain is Formin-like protein 4 (FH4), found in Oryza sativa subsp. japonica (Rice).